The primary structure comprises 188 residues: uncharacterized protein (188 aa).

This is an uncharacterized protein from Homo sapiens (Human).